The sequence spans 181 residues: Large ribosomal subunit protein bL19 (181 aa).

Residues 162 to 173 (EKKAAAEAEAAK) show a composition bias toward basic and acidic residues. Residues 162–181 (EKKAAAEAEAAKAAEATPAE) form a disordered region.

Belongs to the bacterial ribosomal protein bL19 family.

Functionally, this protein is located at the 30S-50S ribosomal subunit interface and may play a role in the structure and function of the aminoacyl-tRNA binding site. This is Large ribosomal subunit protein bL19 from Mesorhizobium japonicum (strain LMG 29417 / CECT 9101 / MAFF 303099) (Mesorhizobium loti (strain MAFF 303099)).